The primary structure comprises 220 residues: Ribosome maturation factor RimM (220 aa).

The 78-residue stretch at 143 to 220 folds into the PRC barrel domain; it reads EGEFYWVDLI…RIVVDWGLDY (78 aa).

It belongs to the RimM family. Binds ribosomal protein uS19.

The protein localises to the cytoplasm. Functionally, an accessory protein needed during the final step in the assembly of 30S ribosomal subunit, possibly for assembly of the head region. Essential for efficient processing of 16S rRNA. May be needed both before and after RbfA during the maturation of 16S rRNA. It has affinity for free ribosomal 30S subunits but not for 70S ribosomes. The polypeptide is Ribosome maturation factor RimM (Cupriavidus metallidurans (strain ATCC 43123 / DSM 2839 / NBRC 102507 / CH34) (Ralstonia metallidurans)).